A 168-amino-acid polypeptide reads, in one-letter code: MTDVTVERIDTLKTGDLHDLCDAADDAVKAGGGFGWVAPPAREIMERYWKGVLVVPERILFVGRLDGVIAGSAQLVKPARNNEAQAHAATLTTSFVAPWARCHGLARRLTVAVEEEARASGFRVLNLDVRETQRRQPSRCTRIWASAVGARIPSMRWWTAKGWPDISM.

The N-acetyltransferase domain maps to 7–168 (ERIDTLKTGD…TAKGWPDISM (162 aa)).

This is an uncharacterized protein from Azospirillum brasilense.